The primary structure comprises 394 residues: MTSLDNQGLWSEKDILKLLECMEHNIPSDDSREFKKSQADLNWSKVAFGLFSGEMCKQKWMEISYNLRKFRTLTELVQEAKFSFTKKTHKNKILTEHPDRPKRPLTAYLRFYKEQRAKYCQMYPKYSNAQLTKILAEKYRQLPAEIKQRYIMDFKKEKEDFQKKMRQFKKRHPVSGHPKKSVVPQSHPTKVPTKSQGDIKNVKSLVKTESPRTVSSDMKFQGEPRKPPMNAYHKFHQESWSSPELRHLSFRKRWVEISRRWHQVPENEKEHYSNQVKRLQKQYRVKLDLWLKRLSPEEYAAYKEAKATCGKRKNMSMSGGRSSKFGRTEQSSSEKGLQIKPGEVEELLDPGTDSSGTIQGHHDGAQSSRQDFTDDSEEDDSSTSSDSSSTDEDD.

Positions 101-169 form a DNA-binding region, HMG box 1; the sequence is PKRPLTAYLR…DFQKKMRQFK (69 aa). Residues 167–180 are compositionally biased toward basic residues; the sequence is QFKKRHPVSGHPKK. The disordered stretch occupies residues 167–197; it reads QFKKRHPVSGHPKKSVVPQSHPTKVPTKSQG. The segment covering 183–197 has biased composition (polar residues); sequence VPQSHPTKVPTKSQG. Residues 225 to 291 constitute a DNA-binding region (HMG box 2); it reads RKPPMNAYHK…QYRVKLDLWL (67 aa). The disordered stretch occupies residues 305 to 394; it reads AKATCGKRKN…SDSSSTDEDD (90 aa).

Its subcellular location is the cytoplasm. It localises to the nucleus. Functionally, essential for proliferation of the inner cell mass and trophectodermal cells in peri-implantation development. The polypeptide is Upstream-binding factor 1-like protein 1 (Mus musculus (Mouse)).